The chain runs to 325 residues: Flavin-dependent thymidylate synthase (325 aa).

The region spanning 12–267 (ISVRLLEYTG…PRLFRWAGPS (256 aa)) is the ThyX domain. FAD-binding positions include Ser65, 89–91 (RHR), and Gln97. DUMP is bound by residues 86–89 (QLVR) and 97–101 (QLSHR). Positions 89–99 (RHRVASYTQLS) match the ThyX motif motif. An insert region spans residues 110-159 (AALKACESIGLDCPSKPAETEGGRKAAYRLYSQALERAARDFGASERFAI). Arg205 serves as a coordination point for dUMP. 221–223 (NAR) contacts FAD. Arg233 lines the dUMP pocket. Arg233 serves as the catalytic Involved in ionization of N3 of dUMP, leading to its activation.

The protein belongs to the thymidylate synthase ThyX family. In terms of assembly, homotetramer. Requires FAD as cofactor.

The catalysed reaction is dUMP + (6R)-5,10-methylene-5,6,7,8-tetrahydrofolate + NADPH + H(+) = dTMP + (6S)-5,6,7,8-tetrahydrofolate + NADP(+). It functions in the pathway pyrimidine metabolism; dTTP biosynthesis. Functionally, catalyzes the reductive methylation of 2'-deoxyuridine-5'-monophosphate (dUMP) to 2'-deoxythymidine-5'-monophosphate (dTMP) while utilizing 5,10-methylenetetrahydrofolate (mTHF) as the methyl donor, and NADPH and FADH(2) as the reductant. In Aeropyrum pernix (strain ATCC 700893 / DSM 11879 / JCM 9820 / NBRC 100138 / K1), this protein is Flavin-dependent thymidylate synthase.